Reading from the N-terminus, the 146-residue chain is Transcriptional regulator AdcR (146 aa).

One can recognise an HTH marR-type domain in the interval methionine 1–glycine 143. Glutamate 24, cysteine 30, glutamate 41, and histidine 42 together coordinate Zn(2+). The segment at residues asparagine 54–lysine 77 is a DNA-binding region (H-T-H motif). Positions 107, 108, and 112 each coordinate Zn(2+).

In terms of assembly, homodimer.

Its activity is regulated as follows. Zinc acts as a coregulator and is required for DNA-binding activity. In terms of biological role, zinc-responsive regulator that acts both as a repressor and as an activator by regulating directly the promoters of its target genes. In the presence of zinc, directly represses the expression of the adcRCBA operon, of genes coding for a group of surface antigen zinc-binding pneumococcal histidine triad proteins (PhtA, PhtB, PhtD and PhtE), and of adcAII. Can also activate expression of adh. The sequence is that of Transcriptional regulator AdcR (adcR) from Streptococcus pneumoniae serotype 2 (strain D39 / NCTC 7466).